Here is a 107-residue protein sequence, read N- to C-terminus: Putative nucleosome assembly protein 1-like 6 (107 aa).

This sequence belongs to the nucleosome assembly protein (NAP) family.

The sequence is that of Putative nucleosome assembly protein 1-like 6 from Homo sapiens (Human).